The primary structure comprises 629 residues: tRNA uridine 5-carboxymethylaminomethyl modification enzyme MnmG (629 aa).

Residues 13-18 (GGGHAG), Val125, and Ser180 each bind FAD. Residue 273 to 287 (GPRYCPSIEDKVMRF) coordinates NAD(+). Gln370 contributes to the FAD binding site.

This sequence belongs to the MnmG family. In terms of assembly, homodimer. Heterotetramer of two MnmE and two MnmG subunits. FAD serves as cofactor.

It localises to the cytoplasm. Its function is as follows. NAD-binding protein involved in the addition of a carboxymethylaminomethyl (cmnm) group at the wobble position (U34) of certain tRNAs, forming tRNA-cmnm(5)s(2)U34. The polypeptide is tRNA uridine 5-carboxymethylaminomethyl modification enzyme MnmG (Shigella flexneri serotype 5b (strain 8401)).